Here is a 227-residue protein sequence, read N- to C-terminus: Phosphoribosylformylglycinamidine synthase subunit PurQ (227 aa).

One can recognise a Glutamine amidotransferase type-1 domain in the interval 3–225; it reads FAVIVLPGSN…VKNWRDTHVT (223 aa). Catalysis depends on Cys-86, which acts as the Nucleophile. Residues His-194 and Glu-196 contribute to the active site.

Part of the FGAM synthase complex composed of 1 PurL, 1 PurQ and 2 PurS subunits.

The protein resides in the cytoplasm. It carries out the reaction N(2)-formyl-N(1)-(5-phospho-beta-D-ribosyl)glycinamide + L-glutamine + ATP + H2O = 2-formamido-N(1)-(5-O-phospho-beta-D-ribosyl)acetamidine + L-glutamate + ADP + phosphate + H(+). The catalysed reaction is L-glutamine + H2O = L-glutamate + NH4(+). It functions in the pathway purine metabolism; IMP biosynthesis via de novo pathway; 5-amino-1-(5-phospho-D-ribosyl)imidazole from N(2)-formyl-N(1)-(5-phospho-D-ribosyl)glycinamide: step 1/2. Part of the phosphoribosylformylglycinamidine synthase complex involved in the purines biosynthetic pathway. Catalyzes the ATP-dependent conversion of formylglycinamide ribonucleotide (FGAR) and glutamine to yield formylglycinamidine ribonucleotide (FGAM) and glutamate. The FGAM synthase complex is composed of three subunits. PurQ produces an ammonia molecule by converting glutamine to glutamate. PurL transfers the ammonia molecule to FGAR to form FGAM in an ATP-dependent manner. PurS interacts with PurQ and PurL and is thought to assist in the transfer of the ammonia molecule from PurQ to PurL. This chain is Phosphoribosylformylglycinamidine synthase subunit PurQ, found in Bacillus pumilus (strain SAFR-032).